We begin with the raw amino-acid sequence, 286 residues long: Protein FAM87A (286 aa).

Helical transmembrane passes span 68-88 (YLHSSLFLSILFQVTLLETAL) and 161-181 (SFFVVFQAWSLMILQVLGDML).

This sequence belongs to the FAM87 family.

The protein localises to the membrane. This Homo sapiens (Human) protein is Protein FAM87A (FAM87A).